Here is a 75-residue protein sequence, read N- to C-terminus: uncharacterized protein (75 aa).

The protein resides in the plastid. It is found in the chloroplast. This is an uncharacterized protein from Calycanthus floridus var. glaucus (Eastern sweetshrub).